Here is a 105-residue protein sequence, read N- to C-terminus: Large ribosomal subunit protein uL24 (105 aa).

The protein belongs to the universal ribosomal protein uL24 family. Part of the 50S ribosomal subunit.

In terms of biological role, one of two assembly initiator proteins, it binds directly to the 5'-end of the 23S rRNA, where it nucleates assembly of the 50S subunit. Functionally, one of the proteins that surrounds the polypeptide exit tunnel on the outside of the subunit. The sequence is that of Large ribosomal subunit protein uL24 from Staphylococcus haemolyticus (strain JCSC1435).